The primary structure comprises 299 residues: Nucleotide-binding protein Moth_0258 (299 aa).

14–21 (GLSGAGKT) is an ATP binding site. 68–71 (DIRG) serves as a coordination point for GTP.

The protein belongs to the RapZ-like family.

In terms of biological role, displays ATPase and GTPase activities. This is Nucleotide-binding protein Moth_0258 from Moorella thermoacetica (strain ATCC 39073 / JCM 9320).